A 219-amino-acid chain; its full sequence is Alpha N-terminal protein methyltransferase 1 (219 aa).

Residues G64, R69, 111 to 112 (LQ), and Q127 contribute to the S-adenosyl-L-methionine site.

It belongs to the methyltransferase superfamily. NTM1 family.

It is found in the cytoplasm. The catalysed reaction is N-terminal L-alanyl-L-prolyl-L-lysyl-[protein] + 3 S-adenosyl-L-methionine = N-terminal N,N,N-trimethyl-L-alanyl-L-prolyl-L-lysyl-[protein] + 3 S-adenosyl-L-homocysteine + 3 H(+). It catalyses the reaction N-terminal L-seryl-L-prolyl-L-lysyl-[protein] + 3 S-adenosyl-L-methionine = N-terminal N,N,N-trimethyl-L-seryl-L-prolyl-L-lysyl-[protein] + 3 S-adenosyl-L-homocysteine + 3 H(+). The enzyme catalyses N-terminal L-prolyl-L-prolyl-L-lysyl-[protein] + 2 S-adenosyl-L-methionine = N-terminal N,N-dimethyl-L-prolyl-L-prolyl-L-lysyl-[protein] + 2 S-adenosyl-L-homocysteine + 2 H(+). In terms of biological role, alpha-N-methyltransferase that methylates the N-terminus of target proteins containing the N-terminal motif [Ala/Pro/Ser]-Pro-Lys when the initiator Met is cleaved. Specifically catalyzes mono-, di- or tri-methylation of exposed alpha-amino group of Ala or Ser residue in the [Ala/Ser]-Pro-Lys motif and mono- or di-methylation of Pro in the Pro-Pro-Lys motif. The polypeptide is Alpha N-terminal protein methyltransferase 1 (tae1) (Schizosaccharomyces pombe (strain 972 / ATCC 24843) (Fission yeast)).